Reading from the N-terminus, the 262-residue chain is DNA-directed RNA polymerase subunit Rpo3 (262 aa).

This sequence belongs to the archaeal Rpo3/eukaryotic RPB3 RNA polymerase subunit family. As to quaternary structure, part of the RNA polymerase complex.

The protein localises to the cytoplasm. The catalysed reaction is RNA(n) + a ribonucleoside 5'-triphosphate = RNA(n+1) + diphosphate. Its function is as follows. DNA-dependent RNA polymerase (RNAP) catalyzes the transcription of DNA into RNA using the four ribonucleoside triphosphates as substrates. The polypeptide is DNA-directed RNA polymerase subunit Rpo3 (Pyrobaculum islandicum (strain DSM 4184 / JCM 9189 / GEO3)).